The following is an 89-amino-acid chain: N.vectensis toxin 7 (89 aa).

The N-terminal stretch at 1 to 21 (MASFFKIAVICLVMLVVCSNA) is a signal peptide. Disulfide bonds link Cys44–Cys77, Cys46–Cys69, and Cys62–Cys78.

As to expression, expressed in ectodermal gland cells.

Probable toxin. This Nematostella vectensis (Starlet sea anemone) protein is N.vectensis toxin 7.